Consider the following 304-residue polypeptide: Voltage-dependent anion channel-forming protein YneE (304 aa).

The next 4 helical transmembrane spans lie at 28–48, 50–70, 194–214, and 220–240; these read LLLN…YTHL, IKFT…FLGF, VLAG…TLIL, and LFCI…TPFI.

It belongs to the anion channel-forming bestrophin (TC 1.A.46) family.

Its subcellular location is the cell membrane. The sequence is that of Voltage-dependent anion channel-forming protein YneE (yneE) from Escherichia coli O157:H7.